Here is a 581-residue protein sequence, read N- to C-terminus: Metal transporter Nramp7.1 (581 aa).

2 N-linked (GlcNAc...) asparagine glycosylation sites follow: Asn-11 and Asn-19. 7 consecutive transmembrane segments (helical) span residues 57–77, 90–110, 146–166, 181–201, 224–244, 270–290, and 307–327; these read FLSY…PGNL, ELLW…SLAA, YCLW…EGII, LLIG…WVGV, LLIA…MSYV, IALL…ALVL, and YFLI…LAVI. Asn-338 is a glycosylation site (N-linked (GlcNAc...) asparagine). 5 helical membrane-spanning segments follow: residues 370-390, 409-429, 434-454, 473-493, and 513-533; these read IYAI…TYAG, LVTR…GGSS, LIII…FALI, IYII…NIYY, and VFIG…VIYL. Residues 551–581 form a disordered region; sequence PQQQANMENGLGPEMERVPYREDLADIPLPE. Basic and acidic residues predominate over residues 564–574; it reads EMERVPYREDL.

This sequence belongs to the NRAMP (TC 2.A.55) family.

The protein resides in the membrane. Functionally, probable divalent metal transporter. This is Metal transporter Nramp7.1 from Populus trichocarpa (Western balsam poplar).